Reading from the N-terminus, the 350-residue chain is MKCSLRVWFLSMAFLLVFIMSLLFTYSHHSMATLPYLDSGALGGTHRVKLVPGYSGLQRLGKEGLLGRNCACSRCMGDASTSEWFDSHFDGNISPVWTRDNMNLPPDVQRWWMMLQPQFKSHNTNEVLEKLFQIVPGENPYRFRDPQQCRRCAVVGNSGNLRGSGYGQEVDSHNFIMRMNQAPTVGFEKDVGSRTTHHFMYPESAKNLPANVSFVLVPFKALDLMWIASALSTGQIRFTYAPVKSFLRVDKEKVQIYNPAFFKYIHDRWTEHHGRYPSTGMLVLFFALHVCDEVNVYGFGADSRGNWHHYWENNRYAGEFRKTGVHDADFEAHIIDMLAKASKIEVYRGN.

Over 1–6 (MKCSLR) the chain is Cytoplasmic. A helical; Signal-anchor for type II membrane protein membrane pass occupies residues 7–27 (VWFLSMAFLLVFIMSLLFTYS). The Lumenal segment spans residues 28 to 350 (HHSMATLPYL…ASKIEVYRGN (323 aa)). Disulfide bonds link Cys-70–Cys-75, Cys-72–Cys-149, and Cys-152–Cys-291. Residues Gln-116, Asn-157, and Asn-180 each contribute to the substrate site. N-linked (GlcNAc...) asparagine glycosylation is present at Asn-211. Residues Tyr-240, Tyr-276, Gly-280, Gly-300, His-309, and His-326 each contribute to the substrate site.

Belongs to the glycosyltransferase 29 family. As to quaternary structure, homodimer; disulfide-linked. Homodimer formation occurs in the endoplasmic reticulum. In terms of processing, the soluble form derives from the membrane form by proteolytic processing. Post-translationally, N-glycosylated; necessary for proper exit from endoplasmic reticulum and trafficking to the Golgi apparatus. In terms of tissue distribution, strongly expressed in brain and liver and to a lesser extent in heart and kidney. Scarcely detectable in lung, pancreas, spleen and submaxillary gland. Expressed in L5 dorsal root ganglion (DRG) neurons (at protein level).

It is found in the golgi apparatus. The protein localises to the golgi stack membrane. The protein resides in the secreted. It catalyses the reaction a beta-D-galactosyl-(1-&gt;3)-N-acetyl-alpha-D-galactosaminyl derivative + CMP-N-acetyl-beta-neuraminate = an N-acetyl-alpha-neuraminyl-(2-&gt;3)-beta-D-galactosyl-(1-&gt;3)-N-acetyl-alpha-D-galactosaminyl derivative + CMP + H(+). It carries out the reaction a ganglioside GM1 (d18:1(4E)) + CMP-N-acetyl-beta-neuraminate = a ganglioside GD1a (d18:1(4E)) + CMP + H(+). The enzyme catalyses ganglioside GM1 (d18:1(4E)/18:0) + CMP-N-acetyl-beta-neuraminate = ganglioside GD1a (18:1(4E)/18:0) + CMP + H(+). The catalysed reaction is a ganglioside GA1 + CMP-N-acetyl-beta-neuraminate = a ganglioside GM1b + CMP + H(+). It catalyses the reaction a ganglioside GA1 (d18:1(4E)) + CMP-N-acetyl-beta-neuraminate = a ganglioside GM1b (d18:1(4E)) + CMP + H(+). It carries out the reaction a ganglioside GD1b + CMP-N-acetyl-beta-neuraminate = a ganglioside GT1b + CMP + H(+). The enzyme catalyses a ganglioside GD1b (d18:1(4E)) + CMP-N-acetyl-beta-neuraminate = a ganglioside GT1b (d18:1(4E)) + CMP + H(+). The catalysed reaction is a globoside GalGb4Cer + CMP-N-acetyl-beta-neuraminate = a globoside MSGG + CMP + H(+). It functions in the pathway protein modification; protein glycosylation. Its pathway is glycolipid biosynthesis. Its function is as follows. A beta-galactoside alpha2-3 sialyltransferase primarily involved in terminal sialylation of ganglio and globo series glycolipids. Catalyzes the transfer of sialic acid (N-acetyl-neuraminic acid; Neu5Ac) from the nucleotide sugar donor CMP-Neu5Ac onto acceptor Galbeta-(1-&gt;3)-GalNAc-terminated glycoconjugates through an alpha2-3 linkage. Sialylates GM1/GM1a, GA1/asialo-GM1 and GD1b gangliosides to form GD1a, GM1b and GT1b, respectively. Together with ST3GAL3, primarily responsible for biosynthesis of brain GD1a and GT1b that function as ligands for myelin-associated glycoprotein MAG on axons, regulating MAG expression and axonal myelin stability and regeneration. Via GT1b regulates TLR2 signaling in spinal cord microglia in response to nerve injury. Responsible for the sialylation of the pluripotent stem cell- and cancer stem cell-associated antigen SSEA3, forming SSEA4. Sialylates with low efficiency asialofetuin, presumably onto O-glycosidically linked Galbeta-(1-&gt;3)-GalNAc-O-Ser. This Mus musculus (Mouse) protein is CMP-N-acetylneuraminate-beta-galactosamide-alpha-2,3-sialyltransferase 2.